A 97-amino-acid chain; its full sequence is Large ribosomal subunit protein bL28 (97 aa).

The protein belongs to the bacterial ribosomal protein bL28 family.

In Rickettsia felis (strain ATCC VR-1525 / URRWXCal2) (Rickettsia azadi), this protein is Large ribosomal subunit protein bL28.